The sequence spans 153 residues: Ribonuclease H (153 aa).

An RNase H type-1 domain is found at 1–141 (MKHIEIYTDG…CDVLARDAAS (141 aa)). Positions 9, 47, 69, and 133 each coordinate Mg(2+).

This sequence belongs to the RNase H family. Monomer. Mg(2+) is required as a cofactor.

It localises to the cytoplasm. The catalysed reaction is Endonucleolytic cleavage to 5'-phosphomonoester.. Functionally, endonuclease that specifically degrades the RNA of RNA-DNA hybrids. This chain is Ribonuclease H, found in Pseudoalteromonas atlantica (strain T6c / ATCC BAA-1087).